A 310-amino-acid polypeptide reads, in one-letter code: Mitochondrial thiamine pyrophosphate carrier 1 (310 aa).

6 helical membrane-spanning segments follow: residues 16–32 (VSPY…GGVA), 88–104 (ILYV…YSAL), 117–141 (IVMP…LTTY), 173–197 (GISG…LMFW), 218–234 (ICGF…TFPL), and 274–291 (GYGV…ISLW). 3 Solcar repeats span residues 16–107 (VSPY…LSKS), 120–205 (PSSV…AREF), and 211–299 (HVPF…VISA).

Belongs to the mitochondrial carrier (TC 2.A.29) family.

The protein resides in the mitochondrion inner membrane. Functionally, mitochondrial transporter that mediates uptake of thiamine pyrophosphate (ThPP) into mitochondria. In Lodderomyces elongisporus (strain ATCC 11503 / CBS 2605 / JCM 1781 / NBRC 1676 / NRRL YB-4239) (Yeast), this protein is Mitochondrial thiamine pyrophosphate carrier 1 (TPC1).